An 88-amino-acid polypeptide reads, in one-letter code: Small ribosomal subunit protein bS20 (88 aa).

A disordered region spans residues 1 to 27 (MANIKSQIKRNKTNEKARLRNKAVKSS).

Belongs to the bacterial ribosomal protein bS20 family.

In terms of biological role, binds directly to 16S ribosomal RNA. This Streptomyces griseus subsp. griseus (strain JCM 4626 / CBS 651.72 / NBRC 13350 / KCC S-0626 / ISP 5235) protein is Small ribosomal subunit protein bS20.